We begin with the raw amino-acid sequence, 188 residues long: Ribosome-recycling factor (188 aa).

This sequence belongs to the RRF family.

Its subcellular location is the cytoplasm. In terms of biological role, responsible for the release of ribosomes from messenger RNA at the termination of protein biosynthesis. May increase the efficiency of translation by recycling ribosomes from one round of translation to another. This Cereibacter sphaeroides (strain ATCC 17029 / ATH 2.4.9) (Rhodobacter sphaeroides) protein is Ribosome-recycling factor.